An 865-amino-acid chain; its full sequence is Xylosyltransferase 2 (865 aa).

The Cytoplasmic segment spans residues 1–15 (MVASARVQKLVRRYK). Residues 16 to 36 (LAIATALAILLLQGLVVWSFS) traverse the membrane as a helical; Signal-anchor for type II membrane protein segment. Residues 37–865 (GLEEDEPGEK…GPVKADGRLR (829 aa)) are Lumenal-facing. The disordered stretch occupies residues 39-155 (EEDEPGEKGR…SVEGAPQPTD (117 aa)). Basic and acidic residues predominate over residues 53-65 (RPLDPGEGSKDTD). The span at 73–82 (SAGRRHGRWR) shows a compositional bias: basic residues. N-linked (GlcNAc...) asparagine glycosylation occurs at Asn122. Disulfide bonds link Cys162/Cys190, Cys206/Cys448, Cys467/Cys480, and Cys469/Cys478. Residues Val239, Asp267, and 296–298 (TIW) each bind UDP-alpha-D-xylose. Asn327 carries an N-linked (GlcNAc...) asparagine glycan. 400–401 (DW) provides a ligand contact to UDP-alpha-D-xylose. Residues Ser481 and 504 to 505 (RK) contribute to the UDP-alpha-D-xylose site. 2 cysteine pairs are disulfide-bonded: Cys581–Cys833 and Cys826–Cys839. N-linked (GlcNAc...) asparagine glycosylation occurs at Asn683.

Belongs to the glycosyltransferase 14 family. XylT subfamily. Monomer. Mg(2+) serves as cofactor. It depends on Mn(2+) as a cofactor. In terms of processing, contains disulfide bonds. In terms of tissue distribution, detected in brain, liver, lung, kidney, heart, spleen and testis, and at lower levels in skeletal muscle.

The protein resides in the golgi apparatus membrane. The protein localises to the secreted. It catalyses the reaction UDP-alpha-D-xylose + L-seryl-[protein] = 3-O-(beta-D-xylosyl)-L-seryl-[protein] + UDP + H(+). The protein operates within glycan metabolism; chondroitin sulfate biosynthesis. Its pathway is glycan metabolism; heparan sulfate biosynthesis. Functionally, catalyzes the first step in the biosynthesis of chondroitin sulfate, heparan sulfate and dermatan sulfate proteoglycans, such as DCN. Transfers D-xylose from UDP-D-xylose to specific serine residues of the core protein. The protein is Xylosyltransferase 2 (Xylt2) of Mus musculus (Mouse).